The chain runs to 400 residues: Zinc finger CCHC domain-containing protein 3 (400 aa).

The disordered stretch occupies residues 1-157 (MATGGGAEEE…LQDEPPAAGP (157 aa)). Composition is skewed to basic and acidic residues over residues 26 to 38 (ARVE…REKM) and 47 to 63 (LAEK…RDET). Over residues 66-75 (GASGGLGSPG) the composition is skewed to gly residues. Basic and acidic residues predominate over residues 91-109 (GDPKGRRRDPTGEASDAYR). At tyrosine 198 the chain carries Phosphotyrosine. 2 CCHC-type zinc fingers span residues 349–365 (RCFR…YCRK) and 369–384 (CNLC…QCPK).

Interacts with CGAS. Interacts with RIGI. Interacts with IFIH1/MDA5.

Its subcellular location is the cytoplasm. Nucleic acid-binding protein involved in innate immune response to DNA and RNA viruses. Binds DNA and RNA in the cytoplasm and acts by promoting recognition of viral nucleic acids by virus sensors, such as RIGI, IFIH1/MDA5 and CGAS. Acts as a co-sensor for recognition of double-stranded DNA (dsDNA) by cGAS in the cytoplasm, thereby playing a role in innate immune response to cytosolic dsDNA and DNA virus. Binds dsDNA and probably acts by promoting sensing of dsDNA by CGAS, leading to enhance CGAS oligomerization and activation. Promotes sensing of viral RNA by RIG-I-like receptors proteins RIGI and IFIH1/MDA5 via two mechanisms: binds double-stranded RNA (dsRNA), enhancing the binding of RIGI and IFIH1/MDA5 to dsRNA and promotes 'Lys-63'-linked ubiquitination and subsequent activation of RIGI and IFIH1/MDA5. The polypeptide is Zinc finger CCHC domain-containing protein 3 (Mus musculus (Mouse)).